We begin with the raw amino-acid sequence, 435 residues long: MTDFSPREIVSELDRYIVGQNDAKRAVAIALRNRWRRLKLEGAMREEVLPKNILMIGPTGCGKTEIARRLAKLANAPFLKVEATKFTEVGYVGRDVEQIIRDLVETAIVMVKAEKRKSLEAKAHQSVEERLLDALVGANAAQTTRDSFRKKLRDGDLEDKEIEIELAQATGNLPMFDLPNMPGAAVGAISIGDIFAKSLGRSTKRRRSTVKEAREPLLAEESEKLMDQEQIIAQAIHSVENNGIVFLDEIDKICAREGRGGADVSREGVQRDLLPLIEGTSVATKHGTIKTDHILFIASGAFHVAKPSDLLPELQGRLPIRVELLPLNEEDFRRILTETEVSLIKQYEALLATEGVNLVFTPEAVSSLAKVAVQVNSSVENIGARRLQTVMERVLDEVSYTAPDRSGQTITIDAAYVEKNIGDLAKNTDLSRFIL.

Residues V18, 60-65 (GCGKTE), D248, E313, and R385 each bind ATP.

It belongs to the ClpX chaperone family. HslU subfamily. A double ring-shaped homohexamer of HslV is capped on each side by a ring-shaped HslU homohexamer. The assembly of the HslU/HslV complex is dependent on binding of ATP.

It is found in the cytoplasm. Its function is as follows. ATPase subunit of a proteasome-like degradation complex; this subunit has chaperone activity. The binding of ATP and its subsequent hydrolysis by HslU are essential for unfolding of protein substrates subsequently hydrolyzed by HslV. HslU recognizes the N-terminal part of its protein substrates and unfolds these before they are guided to HslV for hydrolysis. The polypeptide is ATP-dependent protease ATPase subunit HslU (Beijerinckia indica subsp. indica (strain ATCC 9039 / DSM 1715 / NCIMB 8712)).